We begin with the raw amino-acid sequence, 239 residues long: Phosducin-like protein 3 (239 aa).

Residue M1 is modified to N-acetylmethionine. The Phosducin domain occupies 32–180 (EAEEEQRILQ…EGDIKAQFIG (149 aa)). S43 is modified (phosphoserine). The thioredoxin fold stretch occupies residues 91–239 (FGEVLEISGK…MKRDSDSEGD (149 aa)). Interaction with XIAP stretches follow at residues 97-99 (ISG) and 153-155 (TCI). A phosphoserine mark is found at S234 and S236.

Belongs to the phosducin family. In terms of assembly, interacts (via thioredoxin fold region) with KDR/VEGFR2 (via juxtamembrane domain). Forms ternary complexes with the chaperonin CCT complex and actin substrate, leading to inhibition of actin folding. Interacts with XIAP (via BIR 3 and RING domain). Interacts with HSP90AA1 and HSP90AB1. N-terminal methionine acetylation destabilizes the protein. In terms of tissue distribution, expressed in endothelial cells (at protein level). Expressed in all tissues examined including spleen, thymus, prostate, testis, ovary, small intestine and colon.

It is found in the cytoplasm. It localises to the perinuclear region. The protein resides in the endoplasmic reticulum. Functionally, acts as a chaperone for the angiogenic VEGF receptor KDR/VEGFR2, increasing its abundance by inhibiting its ubiquitination and degradation. Inhibits the folding activity of the chaperonin-containing T-complex (CCT) which leads to inhibition of cytoskeletal actin folding. Acts as a chaperone during heat shock alongside HSP90 and HSP40/70 chaperone complexes. Modulates the activation of caspases during apoptosis. The sequence is that of Phosducin-like protein 3 (PDCL3) from Homo sapiens (Human).